Here is a 226-residue protein sequence, read N- to C-terminus: Small ribosomal subunit protein uS3 (226 aa).

One can recognise a KH type-2 domain in the interval Ile-39–Lys-107.

It belongs to the universal ribosomal protein uS3 family. In terms of assembly, part of the 30S ribosomal subunit. Forms a tight complex with proteins S10 and S14.

In terms of biological role, binds the lower part of the 30S subunit head. Binds mRNA in the 70S ribosome, positioning it for translation. This chain is Small ribosomal subunit protein uS3, found in Acetivibrio thermocellus (strain ATCC 27405 / DSM 1237 / JCM 9322 / NBRC 103400 / NCIMB 10682 / NRRL B-4536 / VPI 7372) (Clostridium thermocellum).